Reading from the N-terminus, the 126-residue chain is Larval cuticle protein 2 (126 aa).

Positions 1–16 are cleaved as a signal peptide; the sequence is MFKFVMVFAVLGLAAA. The Chitin-binding type R&amp;R domain occupies 39-100; that stretch reads ADGFDTDLVV…PVGAVLPTPP (62 aa).

Its function is as follows. Component of the larval cuticle. This Drosophila miranda (Fruit fly) protein is Larval cuticle protein 2 (Lcp2).